Consider the following 578-residue polypeptide: Acyl-coenzyme A synthetase ACSM5, mitochondrial (578 aa).

Residues 1-22 constitute a mitochondrion transit peptide; it reads MRLWLRGLACQALRSSWGVCRI. K96 is modified (N6-acetyllysine; alternate). K96 bears the N6-succinyllysine; alternate mark. N6-acetyllysine is present on K151. Position 229 to 237 (229 to 237) interacts with ATP; it reads TSGTTGAPK. Residue K302 is modified to N6-acetyllysine; alternate. N6-succinyllysine; alternate is present on K302. K335 carries the post-translational modification N6-acetyllysine. ATP contacts are provided by residues 367-372, D454, R469, and K565; that span reads EGYGQS.

Belongs to the ATP-dependent AMP-binding enzyme family. Requires Mg(2+) as cofactor. Mn(2+) is required as a cofactor.

The protein resides in the mitochondrion matrix. It catalyses the reaction a medium-chain fatty acid + ATP + CoA = a medium-chain fatty acyl-CoA + AMP + diphosphate. Its function is as follows. Catalyzes the activation of fatty acids by CoA to produce an acyl-CoA, the first step in fatty acid metabolism. This chain is Acyl-coenzyme A synthetase ACSM5, mitochondrial (Acsm5), found in Mus musculus (Mouse).